Reading from the N-terminus, the 92-residue chain is Tachykinin-2 (92 aa).

Residues 1–22 (MIRVGLILCCIFIVGVFEASSA) form the signal peptide. A propeptide spanning residues 23-37 (DDILTAHNLIKRSEV) is cleaved from the precursor. Position 49 is a methionine amide (Met49). A propeptide spanning residues 52-92 (SEELTRRLIQHPGSMSETSKRGPPKKGDFNPNELKPESNIC) is cleaved from the precursor. The interval 61-92 (QHPGSMSETSKRGPPKKGDFNPNELKPESNIC) is disordered.

The protein belongs to the tachykinin family. As to expression, expressed in the posterior salivary gland and more specifically in the mucus-secreting gland cells.

The protein resides in the secreted. Functionally, tachykinins are active peptides which excite neurons, evoke behavioral responses, are potent vasodilators and secretagogues, and contract (directly or indirectly) many smooth muscles. The chain is Tachykinin-2 from Octopus vulgaris (Common octopus).